The sequence spans 219 residues: Germin-like protein subfamily 2 member 2 (219 aa).

The first 22 residues, 1–22 (MMNSRISIIIALSCIMITSIRA), serve as a signal peptide directing secretion. A disulfide bond links C32 and C47. 2 N-linked (GlcNAc...) asparagine glycosylation sites follow: N52 and N70. The Cupin type-1 domain maps to 59 to 209 (FFAGISKPAV…TFQVGSKMVD (151 aa)). Residues H109, H111, E116, and H155 each contribute to the Mn(2+) site.

The protein belongs to the germin family. In terms of assembly, oligomer (believed to be a pentamer but probably hexamer).

Its subcellular location is the secreted. The protein localises to the extracellular space. It localises to the apoplast. Its function is as follows. May play a role in plant defense. Probably has no oxalate oxidase activity even if the active site is conserved. The polypeptide is Germin-like protein subfamily 2 member 2 (Arabidopsis thaliana (Mouse-ear cress)).